A 420-amino-acid chain; its full sequence is Glucose-1-phosphate adenylyltransferase 2 (420 aa).

Alpha-D-glucose 1-phosphate is bound by residues Tyr109, Gly175, 190–191, and Ser208; that span reads EK.

This sequence belongs to the bacterial/plant glucose-1-phosphate adenylyltransferase family. Homotetramer.

The catalysed reaction is alpha-D-glucose 1-phosphate + ATP + H(+) = ADP-alpha-D-glucose + diphosphate. It participates in glycan biosynthesis; glycogen biosynthesis. Involved in the biosynthesis of ADP-glucose, a building block required for the elongation reactions to produce glycogen. Catalyzes the reaction between ATP and alpha-D-glucose 1-phosphate (G1P) to produce pyrophosphate and ADP-Glc. The polypeptide is Glucose-1-phosphate adenylyltransferase 2 (Pseudoalteromonas atlantica (strain T6c / ATCC BAA-1087)).